The primary structure comprises 305 residues: MIKSWTKKWFLILFLMASCFGHLVATTGEKYFKMANQALKRGDYHRAVAFYKRSCNLRMGVGCTSLGSMYEYGDGVDQNISKAVFYYRRGCNLRNHLACASLGSMYEDGDGVQKDFPKAIYYYRRGCHLKGGVSCGSLGFMYFNGTGVKQNYAKALSFSKYACSLNYGISCNFVGYMYKSAKGVEKDLKKALANFKRGCHLKDGASCVSLGYLYEAGMDVKQNEEQALNLYKKGCSLKEGSGCHNVAVMYYTGKGAPKDLEKATSYYKKGCALGFSGSCKVLEVIGKESDNLQDDAQNDTQDSVQ.

Positions 1–27 are cleaved as a signal peptide; sequence MIKSWTKKWFLILFLMASCFGHLVATT. 4 TPR repeats span residues 28–61, 96–133, 168–205, and 240–277; these read GEKY…RMGV, HLAC…KGGV, GISC…KDGA, and GSGC…GFSG. Disulfide bonds link C55–C63, C91–C99, C127–C135, C163–C171, C199–C207, C235–C243, and C271–C279.

It belongs to the hcp beta-lactamase family.

It is found in the secreted. It carries out the reaction a beta-lactam + H2O = a substituted beta-amino acid. Functionally, may hydrolyze 6-aminopenicillinic acid and 7-aminocephalosporanic acid (ACA) derivatives. Binds to penicillin. The protein is Putative beta-lactamase HcpD (hcpD) of Helicobacter pylori (strain J99 / ATCC 700824) (Campylobacter pylori J99).